Consider the following 436-residue polypeptide: EPS I polysaccharide export inner membrane protein EpsE (436 aa).

12 helical membrane passes run 20–40 (VLGLGAAVASRGAVFVSNILL), 49–69 (FGLFSYAYVTALNLGLFLATG), 91–111 (LCAFIVLLMALIAVAAAALYL), 133–153 (AAIVLIATAFTQALQSFQYAM), 160–180 (ATISIGAAVLLLTMLWAMGPI), 185–205 (LALTIFLAVNAGAAVSQLLVL), 234–254 (VLTTSMGAPVHWICLSMLAAM), 261–281 (LALFSVAFQWYIAITFIPATL), 307–327 (ALLFGGGLSLALGCASFLLAG), 341–361 (AASSMRSLSVAAALCGVSVLL), 375–395 (FAMAAVYSVIYVAASYLALRL), and 396–416 (GFGATSIGLAMSAAYCCLILF).

To E.coli bicyclomycin resistance protein (BCR).

It is found in the cell inner membrane. Probably involved in polymerization and/or export of exopolysaccharide EPS I which functions as a virulence factor. May play a role in export of EPS I or its intermediates across the membranes. The protein is EPS I polysaccharide export inner membrane protein EpsE (epsE) of Ralstonia solanacearum (Pseudomonas solanacearum).